The chain runs to 184 residues: GTP-binding protein Rheb (184 aa).

Lys8 is covalently cross-linked (Glycyl lysine isopeptide (Lys-Gly) (interchain with G-Cter in ubiquitin)). The GDP site is built by Ser16, Val17, Gly18, Lys19, Ser20, Ser21, Val32, and Asp33. The GTP site is built by Ser16, Val17, Gly18, Lys19, Ser20, Ser21, Val32, Asp33, Tyr35, Pro37, Thr38, Gly63, Asn119, Lys120, and Asp122. Ser20 is a binding site for Mg(2+). Positions 35–43 (YDPTIENTF) match the Effector region motif. Thr38 is a Mg(2+) binding site. Asn119 contacts GDP. Asp122 lines the GDP pocket. Phosphoserine; by MAPKAPK5 is present on Ser130. Ala150 is a GDP binding site. Ala150 is a GTP binding site. Cys181 is subject to Cysteine methyl ester. Cys181 carries the S-farnesyl cysteine lipid modification. Residues 182–184 (SVM) constitute a propeptide, removed in mature form.

This sequence belongs to the small GTPase superfamily. Rheb family. In terms of assembly, associates with the mTORC1 complex (MTOR, MLST8 and RPTOR) in a guanyl nucleotide-independent manner. Interacts with TSC2. Interacts with MCRS1; the interaction maintains RHEB at the lysosome in its active GTP-bound form and prevents its interaction with the mTORC1 complex inhibitor TSC2, ensuring activation of the mTORC1 complex by RHEB. Interacts (when prenylated) with PDE6D; this promotes release from membranes. In terms of processing, farnesylation is important for efficiently activating mTORC1-mediated signaling. Post-translationally, polyubiquitinated in response to amino acid, promoting its interaction with MTOR and mTORC1 activation. Deubiquitination by ATXN3 promotes recruitment of the TSC-TBC complex and RHEB inactivation by TSC2. Monoubiquitinated at Lys-8 by RNF152, promoting its association with the TSC-TBC complex. Deubiquitinated at Lys-8 by USP4, promoting mTORC1 activation. Phosphorylation by MAPKAPK5 impairs GTP-binding and inactivation.

The protein resides in the endomembrane system. It is found in the lysosome membrane. The protein localises to the golgi apparatus membrane. It localises to the endoplasmic reticulum membrane. Its subcellular location is the cytoplasm. The protein resides in the cytosol. The catalysed reaction is GTP + H2O = GDP + phosphate + H(+). With respect to regulation, alternates between an inactive form bound to GDP and an active form bound to GTP. Inactivated by the TSC-TBC complex via the GTPase activating protein (GAP) domain of TSC2. Autoinhibited by Tyr-35, which constrains the active site conformation, restricting the access of the catalytic Asp-65 to the nucleotide-binding pocket. Small GTPase that acts as an allosteric activator of the canonical mTORC1 complex, an evolutionarily conserved central nutrient sensor that stimulates anabolic reactions and macromolecule biosynthesis to promote cellular biomass generation and growth. In response to nutrients, growth factors or amino acids, specifically activates the protein kinase activity of MTOR, the catalytic component of the mTORC1 complex: acts by causing a conformational change that allows the alignment of residues in the active site of MTOR, thereby enhancing the phosphorylation of ribosomal protein S6 kinase (RPS6KB1 and RPS6KB2) and EIF4EBP1 (4E-BP1). RHEB is also required for localization of the TSC-TBC complex to lysosomal membranes. In response to starvation, RHEB is inactivated by the TSC-TBC complex, preventing activation of mTORC1. Has low intrinsic GTPase activity. This chain is GTP-binding protein Rheb, found in Mus musculus (Mouse).